A 668-amino-acid chain; its full sequence is Threonine--tRNA ligase (668 aa).

The TGS domain occupies 1 to 61 (MSDLKIALTH…ADGDQVEPVA (61 aa)). A catalytic region spans residues 265–564 (DHRKLGRDLD…LVEHYAGAFP (300 aa)). C358, H409, and H541 together coordinate Zn(2+).

Belongs to the class-II aminoacyl-tRNA synthetase family. As to quaternary structure, homodimer. Zn(2+) is required as a cofactor.

Its subcellular location is the cytoplasm. The catalysed reaction is tRNA(Thr) + L-threonine + ATP = L-threonyl-tRNA(Thr) + AMP + diphosphate + H(+). Its function is as follows. Catalyzes the attachment of threonine to tRNA(Thr) in a two-step reaction: L-threonine is first activated by ATP to form Thr-AMP and then transferred to the acceptor end of tRNA(Thr). Also edits incorrectly charged L-seryl-tRNA(Thr). The sequence is that of Threonine--tRNA ligase from Nocardioides sp. (strain ATCC BAA-499 / JS614).